Here is an 859-residue protein sequence, read N- to C-terminus: Alanine--tRNA ligase (859 aa).

The Zn(2+) site is built by His562, His566, Cys664, and His668.

Belongs to the class-II aminoacyl-tRNA synthetase family. Requires Zn(2+) as cofactor.

It localises to the cytoplasm. It catalyses the reaction tRNA(Ala) + L-alanine + ATP = L-alanyl-tRNA(Ala) + AMP + diphosphate. Catalyzes the attachment of alanine to tRNA(Ala) in a two-step reaction: alanine is first activated by ATP to form Ala-AMP and then transferred to the acceptor end of tRNA(Ala). Also edits incorrectly charged Ser-tRNA(Ala) and Gly-tRNA(Ala) via its editing domain. This Aliivibrio fischeri (strain ATCC 700601 / ES114) (Vibrio fischeri) protein is Alanine--tRNA ligase.